Consider the following 474-residue polypeptide: Ribulose bisphosphate carboxylase large chain (474 aa).

Positions 117 and 167 each coordinate substrate. The active-site Proton acceptor is the Lys169. Residue Lys171 coordinates substrate. 3 residues coordinate Mg(2+): Lys195, Asp197, and Glu198. The residue at position 195 (Lys195) is an N6-carboxylysine. His288 (proton acceptor) is an active-site residue. Positions 289, 321, and 373 each coordinate substrate.

This sequence belongs to the RuBisCO large chain family. Type I subfamily. In terms of assembly, heterohexadecamer of 8 large chains and 8 small chains. The cofactor is Mg(2+).

It carries out the reaction 2 (2R)-3-phosphoglycerate + 2 H(+) = D-ribulose 1,5-bisphosphate + CO2 + H2O. The catalysed reaction is D-ribulose 1,5-bisphosphate + O2 = 2-phosphoglycolate + (2R)-3-phosphoglycerate + 2 H(+). Its function is as follows. RuBisCO catalyzes two reactions: the carboxylation of D-ribulose 1,5-bisphosphate, the primary event in carbon dioxide fixation, as well as the oxidative fragmentation of the pentose substrate. Both reactions occur simultaneously and in competition at the same active site. The sequence is that of Ribulose bisphosphate carboxylase large chain from Hydrogenophilus thermoluteolus (Pseudomonas hydrogenothermophila).